We begin with the raw amino-acid sequence, 532 residues long: Flavin-containing monooxygenase 1 (532 aa).

Alanine 2 is modified (N-acetylalanine). Residues 2 to 510 (AKRVAIVGAG…TRIVKESPSP (509 aa)) are Lumenal-facing. Residues 9 to 13 (GAGVS), glutamate 32, 40 to 41 (LW), and 61 to 62 (NS) contribute to the FAD site. NADP(+) is bound at residue 60 to 61 (SN). An N-linked (GlcNAc...) (high mannose) asparagine glycan is attached at asparagine 120. 195 to 198 (SGTD) is an NADP(+) binding site. Residues 511 to 531 (FASLLKLFSFLALLVAIFQIF) traverse the membrane as a helical segment. Position 532 (leucine 532) is a topological domain, cytoplasmic.

This sequence belongs to the FMO family. The cofactor is FAD. In terms of tissue distribution, liver.

The protein localises to the endoplasmic reticulum membrane. The enzyme catalyses hypotaurine + NADPH + O2 + H(+) = taurine + NADP(+) + H2O. The catalysed reaction is hypotaurine + NADH + O2 + H(+) = taurine + NAD(+) + H2O. It carries out the reaction trimethylamine + NADPH + O2 = trimethylamine N-oxide + NADP(+) + H2O. It catalyses the reaction N,N-dimethylaniline + NADPH + O2 + H(+) = N,N-dimethylaniline N-oxide + NADP(+) + H2O. Functionally, broad spectrum monooxygenase that catalyzes the oxygenation of a wide variety of nitrogen- and sulfur-containing compounds including xenobiotics. Catalyzes the S-oxygenation of hypotaurine to produce taurine, an organic osmolyte involved in cell volume regulation as well as a variety of cytoprotective and developmental processes. In vitro, catalyzes the N-oxygenation of trimethylamine (TMA) to produce trimethylamine N-oxide (TMAO) and could therefore participate to the detoxification of this compound that is generated by the action of gut microbiota from dietary precursors such as choline, choline containing compounds, betaine or L-carnitine. The sequence is that of Flavin-containing monooxygenase 1 (FMO1) from Sus scrofa (Pig).